A 323-amino-acid polypeptide reads, in one-letter code: Down-regulator of invasive growth 2 (323 aa).

Positions Met1–Gln10 are enriched in acidic residues. The interval Met1–Gln26 is disordered. Positions Gln11–Gln26 are enriched in polar residues. The residue at position 34 (Ser34) is a Phosphoserine. Residues Leu67 to Glu87 form a disordered region. Residues Ser225, Ser266, and Ser270 each carry the phosphoserine modification.

As to quaternary structure, forms a complex with DIG1, STE12 and either FUS3 or KSS1. The interaction of FUS3 with STE12 depends on the presence of both DIG1 and DIG2. STE12 is lost from FUS3/DIG1/DIG2 complex after pheromone treatment. DIG1 and DIG2 have also been reported to interact with CLN1 and CLN2. In terms of processing, phosphorylated by FUS3 and KSS1, in a pheromone-stimulated manner.

Its subcellular location is the nucleus. Its function is as follows. DIG2 and DIG1 are negative regulators of the filamentation and pheromone induced mating program. DIG1 and DIG2 inhibit the transcriptional activity of STE12 by direct protein-protein interaction. DIG2 binds to the DNA binding domain (DBD) of STE12 and thus inhibits transcription when overexpressed. This Saccharomyces cerevisiae (strain ATCC 204508 / S288c) (Baker's yeast) protein is Down-regulator of invasive growth 2 (DIG2).